We begin with the raw amino-acid sequence, 618 residues long: Dihydroxy-acid dehydratase (618 aa).

Asp-81 is a binding site for Mg(2+). Cys-122 provides a ligand contact to [2Fe-2S] cluster. Asp-123 and Lys-124 together coordinate Mg(2+). Lys-124 is subject to N6-carboxylysine. Cys-195 is a binding site for [2Fe-2S] cluster. Glu-490 contributes to the Mg(2+) binding site. Ser-516 serves as the catalytic Proton acceptor.

Belongs to the IlvD/Edd family. As to quaternary structure, homodimer. [2Fe-2S] cluster is required as a cofactor. The cofactor is Mg(2+).

The catalysed reaction is (2R)-2,3-dihydroxy-3-methylbutanoate = 3-methyl-2-oxobutanoate + H2O. The enzyme catalyses (2R,3R)-2,3-dihydroxy-3-methylpentanoate = (S)-3-methyl-2-oxopentanoate + H2O. It functions in the pathway amino-acid biosynthesis; L-isoleucine biosynthesis; L-isoleucine from 2-oxobutanoate: step 3/4. Its pathway is amino-acid biosynthesis; L-valine biosynthesis; L-valine from pyruvate: step 3/4. In terms of biological role, functions in the biosynthesis of branched-chain amino acids. Catalyzes the dehydration of (2R,3R)-2,3-dihydroxy-3-methylpentanoate (2,3-dihydroxy-3-methylvalerate) into 2-oxo-3-methylpentanoate (2-oxo-3-methylvalerate) and of (2R)-2,3-dihydroxy-3-methylbutanoate (2,3-dihydroxyisovalerate) into 2-oxo-3-methylbutanoate (2-oxoisovalerate), the penultimate precursor to L-isoleucine and L-valine, respectively. The protein is Dihydroxy-acid dehydratase of Gluconobacter oxydans (strain 621H) (Gluconobacter suboxydans).